The following is a 104-amino-acid chain: Complex III assembly factor LYRM7 (104 aa).

The protein belongs to the complex I LYR family. Interacts with UQCRFS1.

The protein resides in the mitochondrion matrix. In terms of biological role, assembly factor required for Rieske Fe-S protein UQCRFS1 incorporation into the cytochrome b-c1 (CIII) complex. Functions as a chaperone, binding to this subunit within the mitochondrial matrix and stabilizing it prior to its translocation and insertion into the late CIII dimeric intermediate within the mitochondrial inner membrane. The polypeptide is Complex III assembly factor LYRM7 (lyrm7) (Xenopus tropicalis (Western clawed frog)).